Consider the following 232-residue polypeptide: Protein TIFY 10c (232 aa).

The interval 54–73 is disordered; that stretch reads PPAAGAGGAFRPPPTTMNLL. The 36-residue stretch at 114–149 folds into the Tify domain; sequence AGEKAQQLTIFYGGKVVVFENFPSTKVKDLLQIVST. The disordered stretch occupies residues 151–176; sequence DGVDKNTGTAATQSLPRPAHNSLPDL. Residues 156–165 are compositionally biased toward polar residues; that stretch reads NTGTAATQSL. A Jas motif is present at residues 177–202; the sequence is PIARRNSLHRFLEKRKGRMNANAPYQ. The short motif at 179 to 186 is the Nuclear localization signal element; sequence ARRNSLHR.

The protein belongs to the TIFY/JAZ family. In terms of assembly, interacts with BHLH148. Interacts with COI1B in a coronatine-dependent manner. Coronatine is an analog of jasmonoyl isoleucine (JA-Ile). Interacts with TIFY5/JAZ2, TIFY6B/JAZ4, TIFY9/JAZ5, TIFY11A, TIFY11D/JAZ12 and TIFY11G/JAZ15. Post-translationally, ubiquitinated. Increase in jasmonoyl isoleucine (JA-Ile) levels mediates its degradation via COI1B-mediated proteasome pathway.

It localises to the nucleus. Its subcellular location is the cytoplasm. The protein localises to the cytosol. Repressor of jasmonate (JA) responses. Acts as a repressor of JA-induced resistance to the bacterial blight pathogen Xanthomonas oryzae pv. oryzae (Xoo). Regulates JA-induced accumulation of linalool at the transcriptional level of linalool synthase gene LIS. Linalool is important for resistance to bacterial blight pathogen Xoo. In Oryza sativa subsp. indica (Rice), this protein is Protein TIFY 10c.